A 221-amino-acid polypeptide reads, in one-letter code: 6-phosphogluconate phosphatase (221 aa).

Aspartate 10 functions as the Nucleophile in the catalytic mechanism. Mg(2+)-binding residues include aspartate 10, aspartate 12, and aspartate 167. 10-12 serves as a coordination point for substrate; it reads DCD.

Belongs to the HAD-like hydrolase superfamily. CbbY/CbbZ/Gph/YieH family. Mg(2+) serves as cofactor. Requires Mn(2+) as cofactor. It depends on Co(2+) as a cofactor. The cofactor is Zn(2+).

Functionally, catalyzes strongly the dephosphorylation of 6-phosphogluconate (6P-Glu) and slightly the dephosphorylation of dihydroxyacetone phosphate (DHAP) and phosphoenolpyruvate (PEP). Also hydrolyzes both purines (GMP and IMP) and pyrimidines as secondary substrates. The polypeptide is 6-phosphogluconate phosphatase (yieH) (Escherichia coli (strain K12)).